A 295-amino-acid polypeptide reads, in one-letter code: 33 kDa chaperonin (295 aa).

Cystine bridges form between C238/C240 and C271/C274.

It belongs to the HSP33 family. In terms of processing, under oxidizing conditions two disulfide bonds are formed involving the reactive cysteines. Under reducing conditions zinc is bound to the reactive cysteines and the protein is inactive.

It is found in the cytoplasm. Redox regulated molecular chaperone. Protects both thermally unfolding and oxidatively damaged proteins from irreversible aggregation. Plays an important role in the bacterial defense system toward oxidative stress. The chain is 33 kDa chaperonin from Clostridium botulinum (strain Alaska E43 / Type E3).